Consider the following 154-residue polypeptide: Transcriptional repressor NrdR (154 aa).

A zinc finger spans residues 3-34 (CPFCRHPDSRVIDSRETDEGQAIRRRRSCPEC). Positions 46-136 (LAVVKRSGVT…VYRSFSSADD (91 aa)) constitute an ATP-cone domain.

Belongs to the NrdR family. The cofactor is Zn(2+).

Functionally, negatively regulates transcription of bacterial ribonucleotide reductase nrd genes and operons by binding to NrdR-boxes. This chain is Transcriptional repressor NrdR, found in Mycobacterium bovis (strain ATCC BAA-935 / AF2122/97).